The sequence spans 669 residues: Myb-like protein M (669 aa).

The segment at 27–69 (DPSLMDDEFSDNEYDLSPKDDVPSPSKRGRGQIQNGIRRSPNK) is disordered. The segment covering 30–40 (LMDDEFSDNEY) has biased composition (acidic residues). HTH myb-type domains follow at residues 60-118 (QNGI…SPDI) and 119-170 (RKGP…SREV). DNA-binding regions (H-T-H motif) lie at residues 90–114 (WKRISAEMGGQKTGAQCAQHWKRVL) and 142–166 (WKKIAKRICKRTDIQCRYQYLKSLQ). The Myb-like domain maps to 172–223 (WVPKEDEVLVKKVDEMGENLSWLEVSEYLAKLKHTNTLRTALECKTRYLQLT). Disordered stretches follow at residues 226-530 (GGSI…EDNG) and 550-636 (IKNK…PHQS). Composition is skewed to low complexity over residues 234–382 (NQSN…SSPS), 389–415 (NNNNNNNNNNNNNNNNNNNNNNNNSNN), and 450–464 (PTSLTLPSSTLSSPS). Residues 465–482 (CNNSIRQPSPSPSIKTFK) show a composition bias toward polar residues. 3 stretches are compositionally biased toward low complexity: residues 483-521 (STIVSTPSRPSPSSSTNSAFSINNIIDSENNNNNNNNDN), 555-593 (NNNNNNNNNNNNNNNNNNNNNNNNNNNNGNNTLSYNSDN), and 611-636 (SNFKNHNNNQSNTSPMSSPISSPHQS).

Its subcellular location is the nucleus. This chain is Myb-like protein M (mybM), found in Dictyostelium discoideum (Social amoeba).